Reading from the N-terminus, the 339-residue chain is Small ribosomal subunit protein mS27 (339 aa).

The N-terminal 37 residues, 1 to 37, are a transit peptide targeting the mitochondrion; sequence MGTITVVINEGPILLIRALHRATTNKKMFRSTVWRRF.

This sequence belongs to the mitochondrion-specific ribosomal protein mS27 family. As to quaternary structure, component of the mitochondrial small ribosomal subunit (mt-SSU). Mature yeast 74S mitochondrial ribosomes consist of a small (37S) and a large (54S) subunit. The 37S small subunit contains a 15S ribosomal RNA (15S mt-rRNA) and 34 different proteins. The 54S large subunit contains a 21S rRNA (21S mt-rRNA) and 46 different proteins.

The protein localises to the mitochondrion. Component of the mitochondrial ribosome (mitoribosome), a dedicated translation machinery responsible for the synthesis of mitochondrial genome-encoded proteins, including at least some of the essential transmembrane subunits of the mitochondrial respiratory chain. The mitoribosomes are attached to the mitochondrial inner membrane and translation products are cotranslationally integrated into the membrane. The sequence is that of Small ribosomal subunit protein mS27 (MRP13) from Saccharomyces cerevisiae (strain ATCC 204508 / S288c) (Baker's yeast).